The chain runs to 118 residues: Succinate dehydrogenase assembly factor 4, mitochondrial (118 aa).

A mitochondrion-targeting transit peptide spans 1-30 (MQSVTRQTARVLPQMGKQVSYLSTSGAWRA). Positions 65 to 118 (GKLDEFSRHPYQEKEPLKPWPNQTNPYTGEIGGPAGPEPTRYGDWERKGRVSDF) are disordered. 2 stretches are compositionally biased toward basic and acidic residues: residues 66-81 (KLDE…KEPL) and 105-118 (RYGD…VSDF).

Belongs to the SDHAF4 family. In terms of assembly, interacts with SdhA in its FAD-bound form.

It localises to the mitochondrion matrix. In terms of biological role, plays an essential role in the assembly of succinate dehydrogenase (SDH), an enzyme complex (also referred to as respiratory complex II) that is a component of both the tricarboxylic acid (TCA) cycle and the mitochondrial electron transport chain, and which couples the oxidation of succinate to fumarate with the reduction of ubiquinone (coenzyme Q) to ubiquinol. Binds to the flavoprotein subunit SdhA in its FAD-bound form, blocking the generation of excess reactive oxygen species (ROS) and facilitating its assembly with the iron-sulfur protein subunit SdhB into the SDH catalytic dimer. In Drosophila melanogaster (Fruit fly), this protein is Succinate dehydrogenase assembly factor 4, mitochondrial.